Consider the following 125-residue polypeptide: Mite group 2 allergen Gly d 2.02 (125 aa).

The protein belongs to the NPC2 family.

The protein resides in the secreted. In Glycyphagus domesticus (House itch mite), this protein is Mite group 2 allergen Gly d 2.02.